Here is a 699-residue protein sequence, read N- to C-terminus: tRNA wybutosine-synthesizing protein 4 (699 aa).

S-adenosyl-L-methionine contacts are provided by residues R94, G120, D151, D197–L198, and E224.

It belongs to the methyltransferase superfamily. LCMT family.

It carries out the reaction 7-[(3S)-3-amino-3-carboxypropyl]wyosine(37) in tRNA(Phe) + S-adenosyl-L-methionine = 7-[(3S)-(3-amino-3-methoxycarbonyl)propyl]wyosine(37) in tRNA(Phe) + S-adenosyl-L-homocysteine. The enzyme catalyses 7-[(3S)-(3-amino-3-methoxycarbonyl)propyl]wyosine(37) in tRNA(Phe) + S-adenosyl-L-methionine + CO2 = wybutosine(37) in tRNA(Phe) + S-adenosyl-L-homocysteine + 2 H(+). It functions in the pathway tRNA modification; wybutosine-tRNA(Phe) biosynthesis. Its function is as follows. Probable S-adenosyl-L-methionine-dependent methyltransferase that acts as a component of the wybutosine biosynthesis pathway. Wybutosine is a hyper modified guanosine with a tricyclic base found at the 3'-position adjacent to the anticodon of eukaryotic phenylalanine tRNA. May methylate the carboxyl group of leucine residues to form alpha-leucine ester residues. This chain is tRNA wybutosine-synthesizing protein 4 (PPM2), found in Eremothecium gossypii (strain ATCC 10895 / CBS 109.51 / FGSC 9923 / NRRL Y-1056) (Yeast).